Here is a 1085-residue protein sequence, read N- to C-terminus: Translation factor GUF1 homolog, mitochondrial (1085 aa).

Residues 232–409 enclose the tr-type G domain; that stretch reads KYIRNFCILA…RIISDIPPPI (178 aa). GTP-binding positions include 241–248, 302–306, and 356–359; these read AHIDSGKS, DTPGH, and NKID.

The protein belongs to the TRAFAC class translation factor GTPase superfamily. Classic translation factor GTPase family. LepA subfamily.

The protein localises to the mitochondrion inner membrane. The enzyme catalyses GTP + H2O = GDP + phosphate + H(+). In terms of biological role, promotes mitochondrial protein synthesis. May act as a fidelity factor of the translation reaction, by catalyzing a one-codon backward translocation of tRNAs on improperly translocated ribosomes. Binds to mitochondrial ribosomes in a GTP-dependent manner. This Plasmodium falciparum (isolate 3D7) protein is Translation factor GUF1 homolog, mitochondrial.